A 344-amino-acid chain; its full sequence is Ferrochelatase (344 aa).

Fe cation is bound by residues His190 and Glu270.

This sequence belongs to the ferrochelatase family.

The protein resides in the cytoplasm. It catalyses the reaction heme b + 2 H(+) = protoporphyrin IX + Fe(2+). Its pathway is porphyrin-containing compound metabolism; protoheme biosynthesis; protoheme from protoporphyrin-IX: step 1/1. In terms of biological role, catalyzes the ferrous insertion into protoporphyrin IX. The polypeptide is Ferrochelatase (Rickettsia felis (strain ATCC VR-1525 / URRWXCal2) (Rickettsia azadi)).